A 542-amino-acid polypeptide reads, in one-letter code: uncharacterized protein (542 aa).

5 helical membrane passes run 4 to 23 (FVENQLLALVAIMGIGLLLG), 28 to 47 (FGFRLGVAAVLFVGLAFSTI), 51 to 70 (ITVPPLIYVVGLALFVYTIG), 91 to 113 (LALGAIIATTAIAWVVIKALGLA), and 160 to 182 (YSLTYPLGVLVVILTIAVCGGLF). 2 RCK C-terminal domains span residues 190–272 (AKNA…LLGE) and 274–355 (VDGH…IFGD). The next 5 helical transmembrane spans lie at 363–385 (FNLVPLVVGLSLGVLVGMMEFPL), 390–412 (ALSLGNAGGPLLIALLLGAMGRT), 425–447 (LALRQLGITMFLAAIGTTAGAGF), 457–479 (LLIIGVGALLTLVISVLVLVIGH), and 519–541 (YTSVYPLAMVAKIIAAQVLLFLL).

This sequence belongs to the AAE transporter (TC 2.A.81) family.

The protein localises to the cell membrane. This is an uncharacterized protein from Corynebacterium efficiens (strain DSM 44549 / YS-314 / AJ 12310 / JCM 11189 / NBRC 100395).